A 1057-amino-acid chain; its full sequence is MPKRQDIETILVIGSGPIIIGQAAEFDYAGTQACLALKEEGYRVILVNSNPATIMTDNEIADKVYIEPLTHDFIARIIRKEQPDALLPTLGGQTGLNMAIQLHDSGELEANNVKLLGTELESIQQAEDRELFRTLMNDLGVPVPESDIVNTVEQAFAFKEEVGYPLIVRPAFTMGGTGGGICHNDAEFKEIVTNGLHYSPATQCLIEKSIAGFKEIEYEVMRDKNDNAIVVCNMENIDPVGIHTGDSIVVAPSQTLSDVEYQMLRDVSLKVIRALGIEGGCNVQLALDPHSLDYYIIEVNPRVSRSSALASKATGYPIAKLAAKIAIGLTLDEMLNPITETSYAAFEPTLDYVISKIPRFPFDKFEKGERVLGTQMKATGEVMAIGRTYEESLLKAIRSLEYGVHHLGLPNGETFDLGYIKERIQDQDDERLFFIGEAIRRGTTLEEIHEMTKIDYFFLNKFQHIIDIEHDLKSNKGDIDYLKFAKNYGFSDRVIAHRFDMTEEEVYDLRQQNGIIPVYKMVDTCAAEFESATPYYYGTYEYENESVVTEKEKILVLGSGPIRIGQGVEFDYATVHAVWAIQQAGYEAIIVNNNPETVSTDFSISDKLYFEPLTEEDVMNIIDLEQPKGVVVQFGGQTAINLADKLAKHDVKILGTSLEDLNRAEDRKEFEALLHTIDVPQPNGKTATSPQEALENARSIGYPVVVRPSYVLGGRAMEIVNSDAELEDYMNQAVKASPDHPVLVDRYLTGKEIEVDAISDGETVIIPGIMEHIERAGVHSGDSIAVYPPQTLKQEEMTTLEDFTIRLAKGLNIVGLINIQFVIAHDGVYVLEVNPRSSRTVPFLSKITNIQMAQLAMRAIIGDKLVDLGYQPGIQPYTEGVFVKAPVFSFNKLKNVDITLGPEMKSTGEVMGKDATMEKALFKGLTASGMEVKDHGTVLMTVSDKDKDEIVSIAQRLNEVGYRILATQGTARKLAENNIPSEVVGKIGGEDDLLTRIQNGEVQIVVNTMTKGKEFERDGFQIRRASVENGVPCLTSLDTVVALTRVIESMTFTMKNM.

Residues 1 to 401 (MPKRQDIETI…SLLKAIRSLE (401 aa)) form a carboxyphosphate synthetic domain region. ATP is bound by residues arginine 129, arginine 169, glycine 175, glycine 176, lysine 208, isoleucine 210, glutamate 215, glycine 241, isoleucine 242, histidine 243, glutamine 284, and glutamate 298. The 195-residue stretch at 133 to 327 (RTLMNDLGVP…IAKLAAKIAI (195 aa)) folds into the ATP-grasp 1 domain. Glutamine 284, glutamate 298, and asparagine 300 together coordinate Mg(2+). Glutamine 284, glutamate 298, and asparagine 300 together coordinate Mn(2+). An oligomerization domain region spans residues 402–546 (YGVHHLGLPN…YGTYEYENES (145 aa)). Positions 547-929 (VVTEKEKILV…ALFKGLTASG (383 aa)) are carbamoyl phosphate synthetic domain. The ATP-grasp 2 domain occupies 671–861 (EALLHTIDVP…MAQLAMRAII (191 aa)). ATP is bound by residues arginine 707, arginine 746, leucine 748, glutamate 752, glycine 777, valine 778, histidine 779, serine 780, glutamine 820, and glutamate 832. The Mg(2+) site is built by glutamine 820, glutamate 832, and asparagine 834. Positions 820, 832, and 834 each coordinate Mn(2+). The MGS-like domain occupies 930–1057 (MEVKDHGTVL…ESMTFTMKNM (128 aa)). The allosteric domain stretch occupies residues 930–1057 (MEVKDHGTVL…ESMTFTMKNM (128 aa)).

This sequence belongs to the CarB family. In terms of assembly, composed of two chains; the small (or glutamine) chain promotes the hydrolysis of glutamine to ammonia, which is used by the large (or ammonia) chain to synthesize carbamoyl phosphate. Tetramer of heterodimers (alpha,beta)4. Mg(2+) serves as cofactor. Mn(2+) is required as a cofactor.

The catalysed reaction is hydrogencarbonate + L-glutamine + 2 ATP + H2O = carbamoyl phosphate + L-glutamate + 2 ADP + phosphate + 2 H(+). It carries out the reaction hydrogencarbonate + NH4(+) + 2 ATP = carbamoyl phosphate + 2 ADP + phosphate + 2 H(+). It functions in the pathway amino-acid biosynthesis; L-arginine biosynthesis; carbamoyl phosphate from bicarbonate: step 1/1. Its pathway is pyrimidine metabolism; UMP biosynthesis via de novo pathway; (S)-dihydroorotate from bicarbonate: step 1/3. Functionally, large subunit of the glutamine-dependent carbamoyl phosphate synthetase (CPSase). CPSase catalyzes the formation of carbamoyl phosphate from the ammonia moiety of glutamine, carbonate, and phosphate donated by ATP, constituting the first step of 2 biosynthetic pathways, one leading to arginine and/or urea and the other to pyrimidine nucleotides. The large subunit (synthetase) binds the substrates ammonia (free or transferred from glutamine from the small subunit), hydrogencarbonate and ATP and carries out an ATP-coupled ligase reaction, activating hydrogencarbonate by forming carboxy phosphate which reacts with ammonia to form carbamoyl phosphate. The chain is Carbamoyl phosphate synthase large chain from Staphylococcus saprophyticus subsp. saprophyticus (strain ATCC 15305 / DSM 20229 / NCIMB 8711 / NCTC 7292 / S-41).